We begin with the raw amino-acid sequence, 886 residues long: Isoleucine--tRNA ligase (886 aa).

Residues 60-70 (PYANGDIHIGH) carry the 'HIGH' region motif. Residue Glu546 coordinates L-isoleucyl-5'-AMP. Positions 587-591 (KMSKS) match the 'KMSKS' region motif. Lys590 contacts ATP. Residues Cys856, Cys859, Cys870, and Cys873 each contribute to the Zn(2+) site.

Belongs to the class-I aminoacyl-tRNA synthetase family. IleS type 1 subfamily. As to quaternary structure, monomer. Zn(2+) serves as cofactor.

It is found in the cytoplasm. The catalysed reaction is tRNA(Ile) + L-isoleucine + ATP = L-isoleucyl-tRNA(Ile) + AMP + diphosphate. Its function is as follows. Catalyzes the attachment of isoleucine to tRNA(Ile). As IleRS can inadvertently accommodate and process structurally similar amino acids such as valine, to avoid such errors it has two additional distinct tRNA(Ile)-dependent editing activities. One activity is designated as 'pretransfer' editing and involves the hydrolysis of activated Val-AMP. The other activity is designated 'posttransfer' editing and involves deacylation of mischarged Val-tRNA(Ile). The polypeptide is Isoleucine--tRNA ligase (Mesomycoplasma hyopneumoniae (strain 232) (Mycoplasma hyopneumoniae)).